A 354-amino-acid chain; its full sequence is Ornithine transcarbamylase, mitochondrial (354 aa).

The N-terminal 32 residues, 1-32, are a transit peptide targeting the mitochondrion; it reads MLFNLRILLNNAAFRNGHNFMVRNFRCGQPLQ. The residue at position 70 (Lys70) is an N6-acetyllysine; alternate. N6-succinyllysine; alternate is present on Lys70. Lys80 carries the post-translational modification N6-succinyllysine. At Lys88 the chain carries N6-acetyllysine; alternate. Lys88 carries the post-translational modification N6-succinyllysine; alternate. 90–93 lines the carbamoyl phosphate pocket; the sequence is STRT. Ser133 is subject to Phosphoserine. Residue Arg141 participates in carbamoyl phosphate binding. An N6-acetyllysine; alternate modification is found at Lys144. Position 144 is an N6-succinyllysine; alternate (Lys144). The carbamoyl phosphate site is built by His168 and Gln171. Position 199 (Asn199) interacts with L-ornithine. Lys221, Lys231, and Lys238 each carry N6-acetyllysine; alternate. 3 positions are modified to N6-succinyllysine; alternate: Lys221, Lys231, and Lys238. Lys243 bears the N6-acetyllysine mark. Residues Asp263, Ser267, and Met268 each coordinate L-ornithine. 2 positions are modified to N6-succinyllysine: Lys274 and Lys289. N6-acetyllysine; alternate is present on Lys292. Position 292 is an N6-succinyllysine; alternate (Lys292). Residue Cys303 is the Proton acceptor of the active site. 303-304 is a binding site for carbamoyl phosphate; it reads CL. Position 307 is an N6-acetyllysine; alternate (Lys307). At Lys307 the chain carries N6-succinyllysine; alternate. Arg330 serves as a coordination point for carbamoyl phosphate.

Belongs to the aspartate/ornithine carbamoyltransferase superfamily. OTCase family. In terms of assembly, homotrimer. Post-translationally, acetylation at Lys-88 negatively regulates ornithine carbamoyltransferase activity in response to nutrient signals. In terms of tissue distribution, mainly expressed in liver and intestinal mucosa.

It is found in the mitochondrion matrix. It catalyses the reaction carbamoyl phosphate + L-ornithine = L-citrulline + phosphate + H(+). It functions in the pathway nitrogen metabolism; urea cycle; L-citrulline from L-ornithine and carbamoyl phosphate: step 1/1. Its activity is regulated as follows. Negatively regulated by lysine acetylation. Catalyzes the second step of the urea cycle, the condensation of carbamoyl phosphate with L-ornithine to form L-citrulline. The urea cycle ensures the detoxification of ammonia by converting it to urea for excretion. The protein is Ornithine transcarbamylase, mitochondrial of Homo sapiens (Human).